The primary structure comprises 149 residues: Large ribosomal subunit protein bL9 (149 aa).

This sequence belongs to the bacterial ribosomal protein bL9 family.

Binds to the 23S rRNA. The sequence is that of Large ribosomal subunit protein bL9 from Alkaliphilus metalliredigens (strain QYMF).